A 464-amino-acid polypeptide reads, in one-letter code: UDP-N-acetylmuramate--L-alanine ligase (464 aa).

112–118 (GTHGKTT) provides a ligand contact to ATP.

Belongs to the MurCDEF family.

The protein localises to the cytoplasm. The enzyme catalyses UDP-N-acetyl-alpha-D-muramate + L-alanine + ATP = UDP-N-acetyl-alpha-D-muramoyl-L-alanine + ADP + phosphate + H(+). The protein operates within cell wall biogenesis; peptidoglycan biosynthesis. Functionally, cell wall formation. The polypeptide is UDP-N-acetylmuramate--L-alanine ligase (Acidithiobacillus ferrooxidans (strain ATCC 23270 / DSM 14882 / CIP 104768 / NCIMB 8455) (Ferrobacillus ferrooxidans (strain ATCC 23270))).